Reading from the N-terminus, the 339-residue chain is ATP-dependent 6-phosphofructokinase (339 aa).

Residues glycine 11, 72-73 (RY), and 102-105 (GDGS) each bind ATP. Mg(2+) is bound at residue aspartate 103. Residues 125–127 (TID), arginine 162, and 169–171 (MGR) contribute to the substrate site. The active-site Proton acceptor is the aspartate 127. Residues 185-187 (GAD) and 214-216 (KSH) contribute to the ADP site. Substrate-binding positions include glutamate 223, arginine 245, and 251-254 (HVIR).

This sequence belongs to the phosphofructokinase type A (PFKA) family. ATP-dependent PFK group I subfamily. Prokaryotic clade 'B1' sub-subfamily. Homotetramer. Mg(2+) is required as a cofactor.

It is found in the cytoplasm. The catalysed reaction is beta-D-fructose 6-phosphate + ATP = beta-D-fructose 1,6-bisphosphate + ADP + H(+). It participates in carbohydrate degradation; glycolysis; D-glyceraldehyde 3-phosphate and glycerone phosphate from D-glucose: step 3/4. Allosterically activated by ADP and other diphosphonucleosides, and allosterically inhibited by phosphoenolpyruvate. Its function is as follows. Catalyzes the phosphorylation of D-fructose 6-phosphate to fructose 1,6-bisphosphate by ATP, the first committing step of glycolysis. This chain is ATP-dependent 6-phosphofructokinase, found in Streptococcus thermophilus (strain ATCC BAA-491 / LMD-9).